The chain runs to 522 residues: Cytochrome P450 monooxygenase sirB (522 aa).

The helical transmembrane segment at 22 to 42 (ASAILFCTLLTVFLFISQGTV) threads the bilayer. Residue Asn191 is glycosylated (N-linked (GlcNAc...) asparagine). A helical membrane pass occupies residues 304–324 (VLHLSFAATGTVAILITHMIY). Residue Cys462 coordinates heme.

This sequence belongs to the cytochrome P450 family. The cofactor is heme.

Its subcellular location is the membrane. Its pathway is mycotoxin biosynthesis. Cytochrome P450 monooxygenase; part of the gene cluster that mediates the biosynthesis of sirodesmin PL, an epipolythiodioxopiperazine (ETP) characterized by a disulfide bridged cyclic dipeptide and that acts as a phytotoxin which is involved in the blackleg didease of canola. SirD catalyzes the O-prenylation of L-tyrosine (L-Tyr) in the presence of dimethylallyl diphosphate (DMAPP) to yield 4-O-dimethylallyl-L-Tyr, and therefore represents probably the first pathway-specific enzyme in the biosynthesis of sirodesmin PL. 4-O-dimethylallyl-L-Tyr, then undergoes condensation with L-Ser in a reaction catalyzed by the non-ribosomal peptide synthase sirP to form the diketopiperazine (DKP) backbone. Further bishydroxylation of the DKP performed by the cytochrome P450 monooxygenase sirC leads to the production of the intermediate phomamide. This step is essential to form the reactive thiol group required for toxicity of sirodesmin PL. The next steps of sirodesmin biosynthesis are not well understood yet, but some predictions could be made from intermediate compounds identification. Phomamide is converted into phomalizarine via oxidation, probably by sirT. Further oxidation, methylation (by sirM or sirN) and reduction steps convert phomalizarine to deacetyl sirodesmin. Finally, acetyltransferase sirH probably acetylates deacetyl sirodesmin to produce sirodesmin PL. The protein is Cytochrome P450 monooxygenase sirB of Leptosphaeria maculans (Blackleg fungus).